A 152-amino-acid chain; its full sequence is Superoxide dismutase [Cu-Zn] 1 (152 aa).

Histidine 45, histidine 47, and histidine 62 together coordinate Cu cation. Cysteine 56 and cysteine 145 form a disulfide bridge. Positions 62, 70, 79, and 82 each coordinate Zn(2+). Residue histidine 119 coordinates Cu cation.

It belongs to the Cu-Zn superoxide dismutase family. Homodimer. Requires Cu cation as cofactor. Zn(2+) is required as a cofactor.

The protein resides in the cytoplasm. The enzyme catalyses 2 superoxide + 2 H(+) = H2O2 + O2. In terms of biological role, destroys radicals which are normally produced within the cells and which are toxic to biological systems. The chain is Superoxide dismutase [Cu-Zn] 1 (SODCC.1) from Solanum lycopersicum (Tomato).